Here is a 235-residue protein sequence, read N- to C-terminus: Carboxy-S-adenosyl-L-methionine synthase (235 aa).

Residues Tyr35, 60-62 (GCS), 84-85 (DN), 110-111 (DI), Asn125, and Arg192 each bind S-adenosyl-L-methionine.

The protein belongs to the class I-like SAM-binding methyltransferase superfamily. Cx-SAM synthase family. Homodimer.

The enzyme catalyses prephenate + S-adenosyl-L-methionine = carboxy-S-adenosyl-L-methionine + 3-phenylpyruvate + H2O. Functionally, catalyzes the conversion of S-adenosyl-L-methionine (SAM) to carboxy-S-adenosyl-L-methionine (Cx-SAM). The polypeptide is Carboxy-S-adenosyl-L-methionine synthase (Sulfurimonas denitrificans (strain ATCC 33889 / DSM 1251) (Thiomicrospira denitrificans (strain ATCC 33889 / DSM 1251))).